We begin with the raw amino-acid sequence, 562 residues long: Dihydroxy-acid dehydratase 1 (562 aa).

Aspartate 80 provides a ligand contact to Mg(2+). Cysteine 121 is a [2Fe-2S] cluster binding site. Mg(2+)-binding residues include aspartate 122 and lysine 123. N6-carboxylysine is present on lysine 123. Cysteine 194 is a binding site for [2Fe-2S] cluster. Glutamate 446 provides a ligand contact to Mg(2+). The Proton acceptor role is filled by serine 472.

This sequence belongs to the IlvD/Edd family. As to quaternary structure, homodimer. It depends on [2Fe-2S] cluster as a cofactor. Mg(2+) serves as cofactor.

It carries out the reaction (2R)-2,3-dihydroxy-3-methylbutanoate = 3-methyl-2-oxobutanoate + H2O. The catalysed reaction is (2R,3R)-2,3-dihydroxy-3-methylpentanoate = (S)-3-methyl-2-oxopentanoate + H2O. Its pathway is amino-acid biosynthesis; L-isoleucine biosynthesis; L-isoleucine from 2-oxobutanoate: step 3/4. It functions in the pathway amino-acid biosynthesis; L-valine biosynthesis; L-valine from pyruvate: step 3/4. In terms of biological role, functions in the biosynthesis of branched-chain amino acids. Catalyzes the dehydration of (2R,3R)-2,3-dihydroxy-3-methylpentanoate (2,3-dihydroxy-3-methylvalerate) into 2-oxo-3-methylpentanoate (2-oxo-3-methylvalerate) and of (2R)-2,3-dihydroxy-3-methylbutanoate (2,3-dihydroxyisovalerate) into 2-oxo-3-methylbutanoate (2-oxoisovalerate), the penultimate precursor to L-isoleucine and L-valine, respectively. The protein is Dihydroxy-acid dehydratase 1 of Staphylococcus saprophyticus subsp. saprophyticus (strain ATCC 15305 / DSM 20229 / NCIMB 8711 / NCTC 7292 / S-41).